The chain runs to 37 residues: Cytochrome b6-f complex subunit 5 (37 aa).

Residues 5 to 25 (FLFGIVLGLIPVTLAGLFVTA) form a helical membrane-spanning segment.

It belongs to the PetG family. In terms of assembly, the 4 large subunits of the cytochrome b6-f complex are cytochrome b6, subunit IV (17 kDa polypeptide, PetD), cytochrome f and the Rieske protein, while the 4 small subunits are PetG, PetL, PetM and PetN. The complex functions as a dimer.

The protein resides in the plastid. The protein localises to the chloroplast thylakoid membrane. In terms of biological role, component of the cytochrome b6-f complex, which mediates electron transfer between photosystem II (PSII) and photosystem I (PSI), cyclic electron flow around PSI, and state transitions. PetG is required for either the stability or assembly of the cytochrome b6-f complex. This Daucus carota (Wild carrot) protein is Cytochrome b6-f complex subunit 5.